The chain runs to 394 residues: GDP-mannose transporter (394 aa).

Over 1 to 55 (MADKKNEDFVVRMPDNGTVEKEPFLARSPPARARTGSGGGFGDSFSLARVANNPP) the chain is Cytoplasmic. Residues 56–76 (AAILAYCLSSISMTVVNKYVV) form a helical membrane-spanning segment. At 77–80 (SGSE) the chain is on the lumenal side. A helical membrane pass occupies residues 81–101 (WNLNFFYLAVQAIVCIIAILF). At 102–121 (CKQIGIITNLAPFDNVKAKK) the chain is on the cytoplasmic side. Residues 122–144 (WFPVSLLLVGMIYTSTKALQFLS) traverse the membrane as a helical segment. At 145 to 149 (VPVYT) the chain is on the lumenal side. The chain crosses the membrane as a helical span at residues 150–167 (IFKNLTIIAIAYGEVLWF). At 168–173 (GGSVSP) the chain is on the cytoplasmic side. A helical transmembrane segment spans residues 174–198 (LALVSFGLMVLSSVVAAWADIQSAI). The Lumenal portion of the chain corresponds to 199-213 (HGGSHPSEASTAIST). A helical membrane pass occupies residues 214-234 (LNAGYAWMGMNVFCSAAYLLG). Over 235 to 246 (MRKVIHKMNFKD) the chain is Cytoplasmic. The helical transmembrane segment at 247-267 (WDSMFYNNLLTIPVLIVCSLI) threads the bilayer. The Lumenal portion of the chain corresponds to 268-287 (AEDWSAANLARNFPIESRNA). A helical membrane pass occupies residues 288 to 308 (LFIGMIYSGLGAIFISYCSAW). At 309–316 (CIRVTTST) the chain is on the cytoplasmic side. Residues 317 to 339 (TYSMVGALNKLPIAISGLVFFSA) traverse the membrane as a helical segment. At 340–342 (PVT) the chain is on the lumenal side. The helical transmembrane segment at 343 to 362 (FGSVSAIVIGFISGIVYAWA) threads the bilayer. At 363-394 (KARQSSQAKSALPTQQPVMSASSQSNKDASNS) the chain is on the cytoplasmic side. The disordered stretch occupies residues 371–394 (KSALPTQQPVMSASSQSNKDASNS). Over residues 374 to 394 (LPTQQPVMSASSQSNKDASNS) the composition is skewed to polar residues.

Belongs to the TPT transporter family. SLC35D subfamily. Homooligomer.

The protein localises to the golgi apparatus membrane. The protein resides in the cytoplasmic vesicle membrane. Its subcellular location is the endoplasmic reticulum membrane. Functionally, involved in the import of GDP-mannose from the cytoplasm into the Golgi lumen. The chain is GDP-mannose transporter (VRG4) from Pyricularia oryzae (strain 70-15 / ATCC MYA-4617 / FGSC 8958) (Rice blast fungus).